A 266-amino-acid polypeptide reads, in one-letter code: CAAX prenyl protease 2 (266 aa).

The next 3 membrane-spanning stretches (helical) occupy residues 1–21 (MGAGLVSACLPISYVLLVHLF), 42–59 (LLSNFVSIVVTAFYLRDY), and 78–98 (ITYPFILMNAFYLGQFVMMQI). Residues Glu131 and His164 each act as proton donor/acceptor in the active site. 3 helical membrane passes run 186–206 (GFQFCYTYLFGAFATWLQLTT), 210–230 (IVPIIAHAFCNAQGLPLWLEI), and 239–259 (RLTLYAAYSVGFAAFVHLLYT).

It belongs to the peptidase U48 family.

The protein localises to the endoplasmic reticulum membrane. It is found in the membrane. The enzyme catalyses Hydrolyzes the peptide bond -P2-(S-farnesyl or geranylgeranyl)C-P1'-P2'-P3'-COOH where P1' and P2' are amino acids with aliphatic sidechains and P3' is any C-terminal residue.. Its function is as follows. Protease involved in the processing of a variety of prenylated proteins containing the C-terminal CAAX motif, where C is a cysteine modified with an isoprenoid lipid, A is an aliphatic amino acid and X is any C-terminal amino acid. Proteolytically removes the C-terminal three residues of farnesylated and geranylated proteins, leaving the prenylated cysteine as the new C-terminus. This Caenorhabditis elegans protein is CAAX prenyl protease 2.